The following is a 133-amino-acid chain: Alpha-amylase inhibitor/endochitinase (133 aa).

Catalysis depends on glutamate 30, which acts as the Proton donor.

This sequence belongs to the glycosyl hydrolase 19 family. Chitinase class I subfamily.

The enzyme catalyses Random endo-hydrolysis of N-acetyl-beta-D-glucosaminide (1-&gt;4)-beta-linkages in chitin and chitodextrins.. In terms of biological role, this protein functions both as an alpha-amylase inhibitor and as a chitinase. This chain is Alpha-amylase inhibitor/endochitinase, found in Coix lacryma-jobi (Job's tears).